The chain runs to 418 residues: UDP-N-acetylglucosamine 1-carboxyvinyltransferase 2 (418 aa).

22 to 23 (KN) is a binding site for phosphoenolpyruvate. Arginine 93 serves as a coordination point for UDP-N-acetyl-alpha-D-glucosamine. The Proton donor role is filled by cysteine 117. At cysteine 117 the chain carries 2-(S-cysteinyl)pyruvic acid O-phosphothioketal. UDP-N-acetyl-alpha-D-glucosamine contacts are provided by residues 122–126 (RPIDQ), aspartate 305, and isoleucine 327.

It belongs to the EPSP synthase family. MurA subfamily.

The protein localises to the cytoplasm. It carries out the reaction phosphoenolpyruvate + UDP-N-acetyl-alpha-D-glucosamine = UDP-N-acetyl-3-O-(1-carboxyvinyl)-alpha-D-glucosamine + phosphate. It participates in cell wall biogenesis; peptidoglycan biosynthesis. Functionally, cell wall formation. Adds enolpyruvyl to UDP-N-acetylglucosamine. In Clostridium acetobutylicum (strain ATCC 824 / DSM 792 / JCM 1419 / IAM 19013 / LMG 5710 / NBRC 13948 / NRRL B-527 / VKM B-1787 / 2291 / W), this protein is UDP-N-acetylglucosamine 1-carboxyvinyltransferase 2.